The primary structure comprises 369 residues: Glutamate 5-kinase (369 aa).

Position 14 (Lys14) interacts with ATP. The substrate site is built by Ser54, Asp141, and Asn153. ATP-binding positions include 173-174 (SD) and 215-221 (TGGMVTK). Residues 277 to 355 (RGRLHLDPGA…SELATALGPA (79 aa)) enclose the PUA domain.

It belongs to the glutamate 5-kinase family.

The protein localises to the cytoplasm. The enzyme catalyses L-glutamate + ATP = L-glutamyl 5-phosphate + ADP. It participates in amino-acid biosynthesis; L-proline biosynthesis; L-glutamate 5-semialdehyde from L-glutamate: step 1/2. Its function is as follows. Catalyzes the transfer of a phosphate group to glutamate to form L-glutamate 5-phosphate. The chain is Glutamate 5-kinase from Salinispora arenicola (strain CNS-205).